A 504-amino-acid polypeptide reads, in one-letter code: Cytochrome P450 4A25 (504 aa).

Helical transmembrane passes span 6–26 (LASA…LLLL) and 110–130 (APVL…LLNG). Cys451 provides a ligand contact to heme.

Belongs to the cytochrome P450 family. The cofactor is heme.

The protein localises to the endoplasmic reticulum membrane. It carries out the reaction an omega-methyl-long-chain fatty acid + reduced [NADPH--hemoprotein reductase] + O2 = an omega-hydroxy-long-chain fatty acid + oxidized [NADPH--hemoprotein reductase] + H2O + H(+). Functionally, catalyzes the omega- and (omega-1)-hydroxylation of various fatty acids such as laurate and palmitate. Has no activity toward taurochenodeoxycholic acid. This chain is Cytochrome P450 4A25 (CYP4A25), found in Sus scrofa (Pig).